A 480-amino-acid polypeptide reads, in one-letter code: Cyclin L homolog cyl-1 (480 aa).

Positions 25–58 (PKEQNGNVEPKKEEDEKFESTYKQNENTQITPSS) are disordered. Residues 33-44 (EPKKEEDEKFES) show a composition bias toward basic and acidic residues. Residues 45–58 (TYKQNENTQITPSS) are compositionally biased toward polar residues. A Cyclin N-terminal domain is found at 91 to 230 (PSLVDGLSKE…RRILATLGFV (140 aa)). The interval 368-480 (KMAPDGEKST…ESSTPPRSRR (113 aa)) is disordered. Basic and acidic residues-rich tracts occupy residues 384 to 409 (KDSRKVSPDRKNGTKDRGEADRGKKE) and 418 to 442 (NDRDGRGDRRDRDKDRGDRRKDEKK). Residues 443 to 453 (DRRKRTRSRSR) are compositionally biased toward basic residues. Over residues 454-472 (DRKDKNRNRDVGKRYRKES) the composition is skewed to basic and acidic residues.

Belongs to the cyclin family.

Its function is as follows. Involved in pre-mRNA splicing. Functions in association with cyclin-dependent kinases (CDKs). Involved in induction of expression of heat shock protein hsp-16.2 in response to heat shock. Plays a role in male tail development, perhaps acting together with cell cycle regulators cdc-25.2, cdk-1, cyb-3, and cyd-1. The protein is Cyclin L homolog cyl-1 of Caenorhabditis elegans.